We begin with the raw amino-acid sequence, 242 residues long: 3-oxoacyl-[acyl-carrier-protein] reductase FabG (242 aa).

NADP(+)-binding positions include 10-13 (GSTR), Thr35, 57-58 (NV), and Asn84. Ser136 is a substrate binding site. Tyr149 functions as the Proton acceptor in the catalytic mechanism. NADP(+) contacts are provided by residues 149–153 (YCAAK) and Ile182.

It belongs to the short-chain dehydrogenases/reductases (SDR) family. As to quaternary structure, homotetramer.

The catalysed reaction is a (3R)-hydroxyacyl-[ACP] + NADP(+) = a 3-oxoacyl-[ACP] + NADPH + H(+). It participates in lipid metabolism; fatty acid biosynthesis. Catalyzes the NADPH-dependent reduction of beta-ketoacyl-ACP substrates to beta-hydroxyacyl-ACP products, the first reductive step in the elongation cycle of fatty acid biosynthesis. This chain is 3-oxoacyl-[acyl-carrier-protein] reductase FabG (fabG), found in Haemophilus influenzae (strain ATCC 51907 / DSM 11121 / KW20 / Rd).